A 251-amino-acid chain; its full sequence is MSEGEPKNTHFGYKTVEADKKADLVADVFHSVAAKYDIMNDVMSFGVHRFWKRHTIEVAAARPGMKVLDLAGGTGDLTAKFSHLVGDRGQVVLADINDSMLKVGRTKLRDKGIVNNVSYVQANAEALPFPDNHFDIITIAFGLRNVTDKDAALRSMQRVLKPGGKLLVLEFSTPKHELMRKVYDMYSFKVLPKMGALITKDADSYEYLAESIRMHPDQETLKQMMVDAGFEQVDYTNMTDGVVALHRGYKF.

Residues T74, D95, and 123–124 (NA) contribute to the S-adenosyl-L-methionine site.

The protein belongs to the class I-like SAM-binding methyltransferase superfamily. MenG/UbiE family.

The catalysed reaction is a 2-demethylmenaquinol + S-adenosyl-L-methionine = a menaquinol + S-adenosyl-L-homocysteine + H(+). It carries out the reaction a 2-methoxy-6-(all-trans-polyprenyl)benzene-1,4-diol + S-adenosyl-L-methionine = a 5-methoxy-2-methyl-3-(all-trans-polyprenyl)benzene-1,4-diol + S-adenosyl-L-homocysteine + H(+). Its pathway is quinol/quinone metabolism; menaquinone biosynthesis; menaquinol from 1,4-dihydroxy-2-naphthoate: step 2/2. It participates in cofactor biosynthesis; ubiquinone biosynthesis. In terms of biological role, methyltransferase required for the conversion of demethylmenaquinol (DMKH2) to menaquinol (MKH2) and the conversion of 2-polyprenyl-6-methoxy-1,4-benzoquinol (DDMQH2) to 2-polyprenyl-3-methyl-6-methoxy-1,4-benzoquinol (DMQH2). In Shewanella frigidimarina (strain NCIMB 400), this protein is Ubiquinone/menaquinone biosynthesis C-methyltransferase UbiE.